The chain runs to 307 residues: 4-hydroxythreonine-4-phosphate dehydrogenase (307 aa).

The substrate site is built by histidine 126 and threonine 127. 3 residues coordinate a divalent metal cation: histidine 156, histidine 195, and histidine 251. Substrate is bound by residues lysine 259, asparagine 268, and arginine 277.

It belongs to the PdxA family. In terms of assembly, homodimer. The cofactor is Zn(2+). Mg(2+) serves as cofactor. Co(2+) is required as a cofactor.

Its subcellular location is the cytoplasm. The enzyme catalyses 4-(phosphooxy)-L-threonine + NAD(+) = 3-amino-2-oxopropyl phosphate + CO2 + NADH. Its pathway is cofactor biosynthesis; pyridoxine 5'-phosphate biosynthesis; pyridoxine 5'-phosphate from D-erythrose 4-phosphate: step 4/5. Catalyzes the NAD(P)-dependent oxidation of 4-(phosphooxy)-L-threonine (HTP) into 2-amino-3-oxo-4-(phosphooxy)butyric acid which spontaneously decarboxylates to form 3-amino-2-oxopropyl phosphate (AHAP). This Helicobacter pylori (strain J99 / ATCC 700824) (Campylobacter pylori J99) protein is 4-hydroxythreonine-4-phosphate dehydrogenase.